The primary structure comprises 83 residues: Cytochrome b559 subunit alpha (83 aa).

A helical membrane pass occupies residues 22-36; that stretch reads VIHSITIPALFIAGW. Residue H24 coordinates heme.

It belongs to the PsbE/PsbF family. As to quaternary structure, heterodimer of an alpha subunit and a beta subunit. PSII is composed of 1 copy each of membrane proteins PsbA, PsbB, PsbC, PsbD, PsbE, PsbF, PsbH, PsbI, PsbJ, PsbK, PsbL, PsbM, PsbT, PsbX, PsbY, PsbZ, Psb30/Ycf12, peripheral proteins PsbO, CyanoQ (PsbQ), PsbU, PsbV and a large number of cofactors. It forms dimeric complexes. The cofactor is heme b.

It localises to the cellular thylakoid membrane. Functionally, this b-type cytochrome is tightly associated with the reaction center of photosystem II (PSII). PSII is a light-driven water:plastoquinone oxidoreductase that uses light energy to abstract electrons from H(2)O, generating O(2) and a proton gradient subsequently used for ATP formation. It consists of a core antenna complex that captures photons, and an electron transfer chain that converts photonic excitation into a charge separation. This Synechococcus elongatus (strain ATCC 33912 / PCC 7942 / FACHB-805) (Anacystis nidulans R2) protein is Cytochrome b559 subunit alpha.